Here is a 562-residue protein sequence, read N- to C-terminus: 2-succinyl-5-enolpyruvyl-6-hydroxy-3-cyclohexene-1-carboxylate synthase (562 aa).

Belongs to the TPP enzyme family. MenD subfamily. As to quaternary structure, homodimer. Requires Mg(2+) as cofactor. The cofactor is Mn(2+). Thiamine diphosphate serves as cofactor.

It carries out the reaction isochorismate + 2-oxoglutarate + H(+) = 5-enolpyruvoyl-6-hydroxy-2-succinyl-cyclohex-3-ene-1-carboxylate + CO2. Its pathway is quinol/quinone metabolism; 1,4-dihydroxy-2-naphthoate biosynthesis; 1,4-dihydroxy-2-naphthoate from chorismate: step 2/7. It participates in cofactor biosynthesis; phylloquinone biosynthesis. Functionally, catalyzes the thiamine diphosphate-dependent decarboxylation of 2-oxoglutarate and the subsequent addition of the resulting succinic semialdehyde-thiamine pyrophosphate anion to isochorismate to yield 2-succinyl-5-enolpyruvyl-6-hydroxy-3-cyclohexene-1-carboxylate (SEPHCHC). This chain is 2-succinyl-5-enolpyruvyl-6-hydroxy-3-cyclohexene-1-carboxylate synthase, found in Thermosynechococcus vestitus (strain NIES-2133 / IAM M-273 / BP-1).